The sequence spans 145 residues: MSENNENDGFNLDPDVKEELEETKSEEDIIGMYQTDGSNSEKVPVLKSWLPDSDKWQAKTVVNEREARLMAVARNLTEAYDEIEHMQPFIEGLITDLEMYKTSVDGMAREQQKSVLMAMFGRSSEAQESQSMLMSMIAGKQDNDD.

Positions 1-25 (MSENNENDGFNLDPDVKEELEETKS) are disordered. Positions 14-25 (PDVKEELEETKS) are enriched in basic and acidic residues.

This is an uncharacterized protein from His1 virus (isolate Australia/Victoria) (His1V).